Here is a 399-residue protein sequence, read N- to C-terminus: Elongation factor Tu (399 aa).

Positions 10-209 (KPHVNVGTIG…EVDKYIPTPQ (200 aa)) constitute a tr-type G domain. Residues 19 to 26 (GHVDHGKT) form a G1 region. Residue 19 to 26 (GHVDHGKT) participates in GTP binding. Residue threonine 26 participates in Mg(2+) binding. A G2 region spans residues 60-64 (GITIA). Residues 81 to 84 (DCPG) are G3. Residues 81 to 85 (DCPGH) and 136 to 139 (NKQD) contribute to the GTP site. Residues 136-139 (NKQD) form a G4 region. Positions 174–176 (SAL) are G5.

This sequence belongs to the TRAFAC class translation factor GTPase superfamily. Classic translation factor GTPase family. EF-Tu/EF-1A subfamily. In terms of assembly, monomer.

It is found in the cytoplasm. The enzyme catalyses GTP + H2O = GDP + phosphate + H(+). In terms of biological role, GTP hydrolase that promotes the GTP-dependent binding of aminoacyl-tRNA to the A-site of ribosomes during protein biosynthesis. In Helicobacter hepaticus (strain ATCC 51449 / 3B1), this protein is Elongation factor Tu.